Reading from the N-terminus, the 490-residue chain is MTKQSADSNAKSGVTAEICHWASNLATDDIPSDVLERAKYLILDGIACAWVGARVPWSEKYVQATMSFEPPGACRVIGYGQKLGPVAAAMTNSAFIQATELDDYHSEAPLHSASIVLPAVFAASEVLAEQGKTISGIDVILAAIVGFESGPRIGKAIYGSDLLNNGWHCGAVYGAPAGALATGKLLGLTPDSMEDALGIACTQACGLMSAQYGGMVKRVQHGFAARNGLLGGLLAYGGYEAMKGVLERSYGGFLKMFTKGNGREPPYKEEEVVAGLGSFWHTFTIRIKLYACCGLVHGPVEAIEKLQRRYPELLNRANLSNIRHVYVQLSTASNSHCGWIPEERPISSIAGQMSVAYILAVQLVDQQCLLAQFSEFDDNLERPEVWDLARKVTPSHSEEFDQDGNCLSAGRVRIEFNDGSSVTETVEKPLGVKEPMPNERILHKYRTLAGSVTDESRVKEIEDLVLSLDRLTDITPLLELLNCPVKSPLV.

It belongs to the PrpD family. Homodimer.

The protein resides in the mitochondrion. The enzyme catalyses cis-aconitate + H(+) = itaconate + CO2. Its function is as follows. Involved in the production of itaconic acid, a soluble unsaturated dicarboxylic acid mainly produced from sugars. The protein is Cis-aconitate decarboxylase (cad1) of Aspergillus terreus (strain NIH 2624 / FGSC A1156).